The primary structure comprises 352 residues: Outer membrane protein assembly factor BamC (352 aa).

The N-terminal stretch at 1-24 (MAISLQKSTVVKVVGVSLVMLLAA) is a signal peptide. The N-palmitoyl cysteine moiety is linked to residue C25. Residue C25 is the site of S-diacylglycerol cysteine attachment.

The protein belongs to the BamC family. As to quaternary structure, part of the Bam complex, which is composed of the outer membrane protein BamA, and four lipoproteins BamB, BamC, BamD and BamE.

It is found in the cell outer membrane. In terms of biological role, part of the outer membrane protein assembly complex, which is involved in assembly and insertion of beta-barrel proteins into the outer membrane. The polypeptide is Outer membrane protein assembly factor BamC (Yersinia pestis).